The primary structure comprises 114 residues: Integration host factor subunit alpha (114 aa).

Belongs to the bacterial histone-like protein family. In terms of assembly, heterodimer of an alpha and a beta chain.

Its function is as follows. This protein is one of the two subunits of integration host factor, a specific DNA-binding protein that functions in genetic recombination as well as in transcriptional and translational control. The polypeptide is Integration host factor subunit alpha (Afipia carboxidovorans (strain ATCC 49405 / DSM 1227 / KCTC 32145 / OM5) (Oligotropha carboxidovorans)).